Here is a 148-residue protein sequence, read N- to C-terminus: Snaclec B4 (148 aa).

The N-terminal stretch at 1–24 (MGRIIFVSFGLLVVFLSLSGTGAA) is a signal peptide. 3 disulfides stabilise this stretch: C27–C38, C55–C144, and C121–C136. The region spanning 34–145 (YDQHCYKVFD…CRLLGHFVCK (112 aa)) is the C-type lectin domain.

This sequence belongs to the snaclec family. As to quaternary structure, heterodimer; disulfide-linked. Expressed by the venom gland.

It is found in the secreted. Interferes with one step of hemostasis (modulation of platelet aggregation, or coagulation cascade, for example). The sequence is that of Snaclec B4 from Macrovipera lebetinus (Levantine viper).